The primary structure comprises 288 residues: Acetyl-coenzyme A carboxylase carboxyl transferase subunit beta (288 aa).

A CoA carboxyltransferase N-terminal domain is found at 24-288 (LWVKCPESGE…TRTPRASEAA (265 aa)).

It belongs to the AccD/PCCB family. As to quaternary structure, acetyl-CoA carboxylase is a heterohexamer composed of biotin carboxyl carrier protein (AccB), biotin carboxylase (AccC) and two subunits each of ACCase subunit alpha (AccA) and ACCase subunit beta (AccD).

The protein localises to the cytoplasm. It catalyses the reaction N(6)-carboxybiotinyl-L-lysyl-[protein] + acetyl-CoA = N(6)-biotinyl-L-lysyl-[protein] + malonyl-CoA. The protein operates within lipid metabolism; malonyl-CoA biosynthesis; malonyl-CoA from acetyl-CoA: step 1/1. Functionally, component of the acetyl coenzyme A carboxylase (ACC) complex. Biotin carboxylase (BC) catalyzes the carboxylation of biotin on its carrier protein (BCCP) and then the CO(2) group is transferred by the transcarboxylase to acetyl-CoA to form malonyl-CoA. This is Acetyl-coenzyme A carboxylase carboxyl transferase subunit beta from Methylocella silvestris (strain DSM 15510 / CIP 108128 / LMG 27833 / NCIMB 13906 / BL2).